A 923-amino-acid chain; its full sequence is DNA mismatch repair protein MutS (923 aa).

671–678 (GPNMAGKS) contributes to the ATP binding site.

It belongs to the DNA mismatch repair MutS family.

Functionally, this protein is involved in the repair of mismatches in DNA. It is possible that it carries out the mismatch recognition step. This protein has a weak ATPase activity. The sequence is that of DNA mismatch repair protein MutS from Rhodopseudomonas palustris (strain BisB5).